The primary structure comprises 360 residues: Decorin (360 aa).

A signal peptide spans 1-16; the sequence is MKATIIFFLVAQVSWA. The propeptide occupies 17–30; the sequence is GPFQQKGLFDFMLE. An O-linked (Xyl...) (glycosaminoglycan) serine glycan is attached at Ser-34. Intrachain disulfides connect Cys-55/Cys-61 and Cys-59/Cys-68. LRR repeat units follow at residues 74–94, 95–118, 119–142, 143–163, 164–187, 188–213, 214–234, 235–258, 259–282, 283–305, 306–335, and 336–360; these read EKVPKDLPPDTALLDLQNNKI, TEIKDGDFKNLKNLHTLILINNKI, SKISPGAFAPLVKLERLYLSKNQL, KELPEKMPKTLQELRVHENEI, TKVRKSVFNGLNQMIVVELGTNPL, KSSGIENGAFQGMKKLSYIRIADTNI, TTIPQGLPPSLTELHLDGNKI, TKVDAASLKGLNNLAKLGLSFNSI, SAVDNGSLANTPHLRELHLNNNKL, VKVPGGLADHKYIQVVYLHNNNI, SAIGSNDFCPPGYNTKKASYSGVSLFSNPV, and QYWEIQPSTFRCVYVRAAVQLGNYK. A glycan (N-linked (GlcNAc...) asparagine) is linked at Asn-212. Residues Asn-263 and Asn-304 are each glycosylated (N-linked (GlcNAc...) asparagine). A disulfide bridge links Cys-314 with Cys-347.

The protein belongs to the small leucine-rich proteoglycan (SLRP) family. SLRP class I subfamily. As to quaternary structure, binds to type I and type II collagen, fibronectin and TGF-beta. Forms a ternary complex with MFAP2 and ELN. Interacts with DPT. In terms of processing, the attached glycosaminoglycan chain can be either chondroitin sulfate or dermatan sulfate depending upon the tissue of origin.

It is found in the secreted. Its subcellular location is the extracellular space. The protein localises to the extracellular matrix. May affect the rate of fibrils formation. The protein is Decorin (DCN) of Ovis aries (Sheep).